Consider the following 241-residue polypeptide: MSEVKYKRVIMKLSGEALAGDKGTGINPPVIQKVAEELRDVHDLGVQIAIVVGGGNMWRGETGEQLGMERVQADYIGMLGTVMNALALQDSLESLGVPTRVQTSIEMRQIAEPYIRRKAVRHLEKNRIVIFAAGTGSPYFSTDTTSALRAAEIGAEAILMAKNGVDGIYSADPNVDPDAVKFDELTHMDIIDKGLNVMDTTASSLSMENNIPLVVFNLNQAGNIKKVVAGENIGTTVRGEE.

12–15 (KLSG) contacts ATP. The involved in allosteric activation by GTP stretch occupies residues 20 to 25 (GDKGTG). Gly54 serves as a coordination point for UMP. The ATP site is built by Gly55 and Arg59. Residues Asp74 and 135-142 (TGSPYFST) contribute to the UMP site. ATP-binding residues include Asn163, Tyr169, and Asp172.

The protein belongs to the UMP kinase family. In terms of assembly, homohexamer.

The protein resides in the cytoplasm. It catalyses the reaction UMP + ATP = UDP + ADP. Its pathway is pyrimidine metabolism; CTP biosynthesis via de novo pathway; UDP from UMP (UMPK route): step 1/1. Allosterically activated by GTP. Inhibited by UTP. In terms of biological role, catalyzes the reversible phosphorylation of UMP to UDP. In Pediococcus pentosaceus (strain ATCC 25745 / CCUG 21536 / LMG 10740 / 183-1w), this protein is Uridylate kinase.